The primary structure comprises 119 residues: Ribonuclease P protein component (119 aa).

Belongs to the RnpA family. As to quaternary structure, consists of a catalytic RNA component (M1 or rnpB) and a protein subunit.

It catalyses the reaction Endonucleolytic cleavage of RNA, removing 5'-extranucleotides from tRNA precursor.. RNaseP catalyzes the removal of the 5'-leader sequence from pre-tRNA to produce the mature 5'-terminus. It can also cleave other RNA substrates such as 4.5S RNA. The protein component plays an auxiliary but essential role in vivo by binding to the 5'-leader sequence and broadening the substrate specificity of the ribozyme. The polypeptide is Ribonuclease P protein component (Borreliella burgdorferi (strain ZS7) (Borrelia burgdorferi)).